Consider the following 434-residue polypeptide: Elongation factor 1-alpha (434 aa).

The tr-type G domain occupies 5 to 232; the sequence is KPHINLVVIG…DNVHPPKRPV (228 aa). A G1 region spans residues 14–21; it reads GHVVAGKS. 14 to 21 provides a ligand contact to GTP; the sequence is GHVVAGKS. The segment at 70–74 is G2; that stretch reads GITID. Residues 91–94 are G3; it reads DAPG. GTP-binding positions include 91 to 95 and 153 to 156; these read DAPGH and NKMD. The G4 stretch occupies residues 153–156; that stretch reads NKMD. The interval 196-198 is G5; that stretch reads SGF.

The protein belongs to the TRAFAC class translation factor GTPase superfamily. Classic translation factor GTPase family. EF-Tu/EF-1A subfamily.

Its subcellular location is the cytoplasm. This protein promotes the GTP-dependent binding of aminoacyl-tRNA to the A-site of ribosomes during protein biosynthesis. This Blastocystis hominis protein is Elongation factor 1-alpha.